The chain runs to 498 residues: Pentatricopeptide repeat-containing protein At2g15980 (498 aa).

7 PPR repeats span residues 244 to 274 (NATTFNSMMVSFYREGETEMVERIWREMEEE), 280 to 314 (NVYSYNVLMEAYCARGLMSEAEKVWEEMKVRGVVY), 315 to 349 (DIVAYNTMIGGLCSNFEVVKAKELFRDMGLKGIEC), 350 to 384 (TCLTYEHLVNGYCKAGDVDSGLVVYREMKRKGFEA), 385 to 423 (DGLTIEALVEGLCDDRDGQRVVEAADIVKDAVREAMFYP), 424 to 458 (SRNCYELLVKRLCEDGKMDRALNIQAEMVGKGFKP), and 459 to 489 (SQETYRAFIDGYGIVGDEETSALLAIEMAES).

Belongs to the PPR family. P subfamily.

The sequence is that of Pentatricopeptide repeat-containing protein At2g15980 from Arabidopsis thaliana (Mouse-ear cress).